A 441-amino-acid chain; its full sequence is Ribulose bisphosphate carboxylase large chain (441 aa).

At K5 the chain carries N6,N6,N6-trimethyllysine. The substrate site is built by N114 and T164. Residue K166 is the Proton acceptor of the active site. K168 is a substrate binding site. 3 residues coordinate Mg(2+): K192, D194, and E195. K192 carries the N6-carboxylysine modification. The active-site Proton acceptor is the H285. Substrate is bound by residues R286, H318, and S370.

This sequence belongs to the RuBisCO large chain family. Type I subfamily. In terms of assembly, heterohexadecamer of 8 large chains and 8 small chains; disulfide-linked. The disulfide link is formed within the large subunit homodimers. Requires Mg(2+) as cofactor. The disulfide bond which can form in the large chain dimeric partners within the hexadecamer appears to be associated with oxidative stress and protein turnover.

It localises to the plastid. The protein resides in the chloroplast. The catalysed reaction is 2 (2R)-3-phosphoglycerate + 2 H(+) = D-ribulose 1,5-bisphosphate + CO2 + H2O. The enzyme catalyses D-ribulose 1,5-bisphosphate + O2 = 2-phosphoglycolate + (2R)-3-phosphoglycerate + 2 H(+). Functionally, ruBisCO catalyzes two reactions: the carboxylation of D-ribulose 1,5-bisphosphate, the primary event in carbon dioxide fixation, as well as the oxidative fragmentation of the pentose substrate in the photorespiration process. Both reactions occur simultaneously and in competition at the same active site. This is Ribulose bisphosphate carboxylase large chain from Pellaea rotundifolia (Button fern).